A 223-amino-acid polypeptide reads, in one-letter code: Sigma non-opioid intracellular receptor 1 (223 aa).

The Lumenal segment spans residues 1 to 7; the sequence is MAVLSSR. Residues 8-29 traverse the membrane as a helical segment; it reads AMRAALGLAVLAVVIQLLRTWL. At 30 to 223 the chain is on the cytoplasmic side; the sequence is SSKSYLFNQK…HTYLSELGLS (194 aa). The important for ligand-binding stretch occupies residues 98 to 105; that stretch reads SLTEYILL. The interval 176–223 is C-terminal hydrophobic region; that stretch reads FIPSTMGFALADTIFSTQDFCTLFYTFRIYARCLLLETHTYLSELGLS.

Belongs to the ERG2 family. In terms of assembly, homotrimer.

Its subcellular location is the nucleus inner membrane. It is found in the nucleus outer membrane. The protein resides in the nucleus envelope. The protein localises to the cytoplasmic vesicle. It localises to the endoplasmic reticulum membrane. Its subcellular location is the membrane. Functionally, may function in lipid transport from the endoplasmic reticulum and be involved in a wide array of cellular functions probably through regulation of the biogenesis of lipid microdomains at the plasma membrane. May regulate calcium efflux at the endoplasmic reticulum. The protein is Sigma non-opioid intracellular receptor 1 (SIGMAR1) of Taricha granulosa (Roughskin newt).